Here is a 943-residue protein sequence, read N- to C-terminus: TBC1 domain family member 2B (943 aa).

The segment at 1-29 is disordered; sequence MPGVEDPCDSQGTPPEEPSTSVAPGEAAK. Positions 10-22 are enriched in polar residues; sequence SQGTPPEEPSTSV. Residues 32–129 enclose the PH domain; the sequence is SPRLCGYLAK…WLQELQQKRW (98 aa). A coiled-coil region spans residues 315-514; that stretch reads RMESDVLLKL…ARYSNLEAKM (200 aa). The Rab-GAP TBC domain maps to 642–836; sequence GIPHEHRSRM…RIWDSLLYEG (195 aa).

The protein localises to the early endosome. GTPase-activating protein that plays a role in the early steps of endocytosis. This chain is TBC1 domain family member 2B (tbc1d2b), found in Xenopus tropicalis (Western clawed frog).